We begin with the raw amino-acid sequence, 355 residues long: N5-carboxyaminoimidazole ribonucleotide synthase (355 aa).

ATP is bound by residues arginine 80, lysine 120, 125–131 (GYDGRGQ), 153–156 (EQGI), glutamate 161, histidine 184, and 237–238 (NE). Residues 84-267 (KQLFDKLHLP…QFELHLRAIT (184 aa)) enclose the ATP-grasp domain.

The protein belongs to the PurK/PurT family. In terms of assembly, homodimer.

It carries out the reaction 5-amino-1-(5-phospho-beta-D-ribosyl)imidazole + hydrogencarbonate + ATP = 5-carboxyamino-1-(5-phospho-D-ribosyl)imidazole + ADP + phosphate + 2 H(+). Its pathway is purine metabolism; IMP biosynthesis via de novo pathway; 5-amino-1-(5-phospho-D-ribosyl)imidazole-4-carboxylate from 5-amino-1-(5-phospho-D-ribosyl)imidazole (N5-CAIR route): step 1/2. In terms of biological role, catalyzes the ATP-dependent conversion of 5-aminoimidazole ribonucleotide (AIR) and HCO(3)(-) to N5-carboxyaminoimidazole ribonucleotide (N5-CAIR). This Escherichia coli (strain K12) protein is N5-carboxyaminoimidazole ribonucleotide synthase.